Here is a 600-residue protein sequence, read N- to C-terminus: Kynurenine 3-monooxygenase (600 aa).

The tract at residues 217 to 242 (GDSCADEPSGCGGRKQATTKSQGSEY) is disordered.

It belongs to the aromatic-ring hydroxylase family. KMO subfamily. Requires FAD as cofactor.

The protein resides in the mitochondrion outer membrane. The enzyme catalyses L-kynurenine + NADPH + O2 + H(+) = 3-hydroxy-L-kynurenine + NADP(+) + H2O. It functions in the pathway cofactor biosynthesis; NAD(+) biosynthesis; quinolinate from L-kynurenine: step 1/3. Functionally, catalyzes the hydroxylation of L-kynurenine (L-Kyn) to form 3-hydroxy-L-kynurenine (L-3OHKyn). Required for synthesis of quinolinic acid. The sequence is that of Kynurenine 3-monooxygenase from Mycosarcoma maydis (Corn smut fungus).